A 143-amino-acid polypeptide reads, in one-letter code: Larval cuticle protein LCP-17 (143 aa).

An N-terminal signal peptide occupies residues 1–16 (MKFLIVLAVAVACASA). One can recognise a Chitin-binding type R&amp;R domain in the interval 41–110 (EGHFQFNYET…PQGSHLPTPH (70 aa)).

Its function is as follows. Component of the cuticle of the larva of Bombyx mori. This Bombyx mori (Silk moth) protein is Larval cuticle protein LCP-17 (LCP17).